The primary structure comprises 352 residues: Hematopoietic SH2 domain-containing protein (352 aa).

Residues 34–125 enclose the SH2 domain; sequence WFHGAISRED…PRRELLTQPC (92 aa). Disordered regions lie at residues 157–199 and 241–352; these read EEAS…LGET and VISG…PGYC. Residues 180–191 show a composition bias toward polar residues; sequence RITTKEATSSCP. The span at 283–295 shows a compositional bias: basic and acidic residues; that stretch reads PKDRKVPTRKAER. A compositionally biased stretch (pro residues) spans 343 to 352; that stretch reads QPPPFAPGYC.

Interacts with FES and TNK2. May be phosphorylated by FES and ACK1. As to expression, predominantly expressed in spleen and hematopoietic cells such as peripheral blood leukocytes and weakly expressed in prostate, thymus, heart, small intestine and placenta.

Its subcellular location is the cytoplasm. The protein localises to the nucleus. Functionally, may be a modulator of the apoptotic response through its ability to affect mitochondrial stability. Adapter protein involved in tyrosine kinase and CD28 signaling. Seems to affect CD28-mediated activation of the RE/AP element of the interleukin-2 promoter. In Homo sapiens (Human), this protein is Hematopoietic SH2 domain-containing protein (HSH2D).